We begin with the raw amino-acid sequence, 125 residues long: Hydrogenase maturation factor HypA (125 aa).

Position 2 (His-2) interacts with Ni(2+). Zn(2+) contacts are provided by Cys-73, Cys-76, Cys-96, and Cys-99.

This sequence belongs to the HypA/HybF family.

Functionally, involved in the maturation of [NiFe] hydrogenases. Required for nickel insertion into the metal center of the hydrogenase. This chain is Hydrogenase maturation factor HypA, found in Methanobrevibacter smithii (strain ATCC 35061 / DSM 861 / OCM 144 / PS).